The following is a 496-amino-acid chain: Probable diguanylate cyclase DgcJ (496 aa).

Helical transmembrane passes span 11-31 (FIAA…LVAS) and 305-325 (ILYF…TALI). One can recognise a GGDEF domain in the interval 374–496 (SSVMFIAIDM…VNKQNKNSRS (123 aa)). D382 provides a ligand contact to Mg(2+). Residues N390, H395, and D399 each coordinate substrate. D425 lines the Mg(2+) pocket. D425 acts as the Proton acceptor in catalysis.

As to quaternary structure, homodimer. The cofactor is Mg(2+).

It is found in the cell inner membrane. The catalysed reaction is 2 GTP = 3',3'-c-di-GMP + 2 diphosphate. Its pathway is purine metabolism; 3',5'-cyclic di-GMP biosynthesis. Functionally, catalyzes the synthesis of cyclic-di-GMP (c-di-GMP) via the condensation of 2 GTP molecules. This chain is Probable diguanylate cyclase DgcJ, found in Escherichia coli (strain K12).